Consider the following 293-residue polypeptide: Elongation factor Ts (293 aa).

Residues Thr-80–Val-83 form an involved in Mg(2+) ion dislocation from EF-Tu region.

Belongs to the EF-Ts family.

The protein localises to the cytoplasm. Associates with the EF-Tu.GDP complex and induces the exchange of GDP to GTP. It remains bound to the aminoacyl-tRNA.EF-Tu.GTP complex up to the GTP hydrolysis stage on the ribosome. The chain is Elongation factor Ts from Burkholderia thailandensis (strain ATCC 700388 / DSM 13276 / CCUG 48851 / CIP 106301 / E264).